The following is a 427-amino-acid chain: MESLTLQPIARVDGAINLPGSKSVSNRALLLAALACGKTVLTNLLDSDDVRHMLNALSALGINYTLSADRTRCDITGNGGPLRASGALELFLGNAGTAMRPLAAALCLGQNEIVLTGEPRMKERPIGHLVDSLRQGGANIDYQEQENYPPLRLRGGFTGGDIEVDGSVSSQFLTALLMTAPLAPEDTTIRVKGELVSKPYIDITLNLMKTFGVEITNHHYQQFVVKGGQQYHSPGRYLVEGDASSASYFLAAGAIKGGTVKVTGIGRKSMQGDIRFADVLEKMGATITWGDDFIACTRGELHAIDMDMNHIPDAAMTIATTALFAKGTTTLRNIYNWRVKETDRLFAMATELRKVGAEVEEGHDYIRITPPAKLQHADIGTYNDHRMAMCFSLVALSDTPVTILDPKCTAKTFPDYFEQLARMSTPA.

Lys22, Ser23, and Arg27 together coordinate 3-phosphoshikimate. Lys22 provides a ligand contact to phosphoenolpyruvate. Phosphoenolpyruvate is bound by residues Gly96 and Arg124. The 3-phosphoshikimate site is built by Ser169, Ser170, Gln171, Ser197, Asp313, Asn336, and Lys340. Gln171 contacts phosphoenolpyruvate. Asp313 acts as the Proton acceptor in catalysis. 3 residues coordinate phosphoenolpyruvate: Arg344, Arg386, and Lys411.

Belongs to the EPSP synthase family. As to quaternary structure, monomer.

The protein localises to the cytoplasm. The catalysed reaction is 3-phosphoshikimate + phosphoenolpyruvate = 5-O-(1-carboxyvinyl)-3-phosphoshikimate + phosphate. The protein operates within metabolic intermediate biosynthesis; chorismate biosynthesis; chorismate from D-erythrose 4-phosphate and phosphoenolpyruvate: step 6/7. Functionally, catalyzes the transfer of the enolpyruvyl moiety of phosphoenolpyruvate (PEP) to the 5-hydroxyl of shikimate-3-phosphate (S3P) to produce enolpyruvyl shikimate-3-phosphate and inorganic phosphate. The chain is 3-phosphoshikimate 1-carboxyvinyltransferase from Salmonella heidelberg (strain SL476).